The following is a 348-amino-acid chain: MARLLIAASGTGGHVFPALGVAEKLSDYEIQWLGTPNRLEQSLVGDRYPFHTISVEGFQTRSPIKKLKILLGLLSSIFEVKQLIEQQKIDVVFTTGGYIASSAILAAKLSGIPAILHESNYIPGKVTKLLSRFCTTVALGFEGTKQYLPTTPTIWVSTPVRSQFYTSQPLDLNIPNDVPLIVIIGGSQGAVSVNQLVRQCVPYWLEMGAYVVHLTGKNDPNANSLQDPQYITLPFYDNMAGLLQRADLAVSRAGSGTLTELAITKTPAILIPYPFAAEDHQSFNAQVFVDAGAAYCYQQKELTDKILTDLVSDLLNHPDKLKEMSNKSSELAVMDSSEKLAKLIRDSI.

UDP-N-acetyl-alpha-D-glucosamine-binding positions include 11–13 (TGG), Asn120, Arg161, Ser187, and Gln281.

Belongs to the glycosyltransferase 28 family. MurG subfamily.

Its subcellular location is the cell inner membrane. It catalyses the reaction di-trans,octa-cis-undecaprenyl diphospho-N-acetyl-alpha-D-muramoyl-L-alanyl-D-glutamyl-meso-2,6-diaminopimeloyl-D-alanyl-D-alanine + UDP-N-acetyl-alpha-D-glucosamine = di-trans,octa-cis-undecaprenyl diphospho-[N-acetyl-alpha-D-glucosaminyl-(1-&gt;4)]-N-acetyl-alpha-D-muramoyl-L-alanyl-D-glutamyl-meso-2,6-diaminopimeloyl-D-alanyl-D-alanine + UDP + H(+). It functions in the pathway cell wall biogenesis; peptidoglycan biosynthesis. Functionally, cell wall formation. Catalyzes the transfer of a GlcNAc subunit on undecaprenyl-pyrophosphoryl-MurNAc-pentapeptide (lipid intermediate I) to form undecaprenyl-pyrophosphoryl-MurNAc-(pentapeptide)GlcNAc (lipid intermediate II). The protein is UDP-N-acetylglucosamine--N-acetylmuramyl-(pentapeptide) pyrophosphoryl-undecaprenol N-acetylglucosamine transferase of Crocosphaera subtropica (strain ATCC 51142 / BH68) (Cyanothece sp. (strain ATCC 51142)).